The chain runs to 398 residues: 4-hydroxy-3-methylbut-2-en-1-yl diphosphate synthase (ferredoxin) (398 aa).

Positions 306, 309, 340, and 347 each coordinate [4Fe-4S] cluster.

It belongs to the IspG family. The cofactor is [4Fe-4S] cluster.

The enzyme catalyses (2E)-4-hydroxy-3-methylbut-2-enyl diphosphate + 2 oxidized [2Fe-2S]-[ferredoxin] + H2O = 2-C-methyl-D-erythritol 2,4-cyclic diphosphate + 2 reduced [2Fe-2S]-[ferredoxin] + H(+). The protein operates within isoprenoid biosynthesis; isopentenyl diphosphate biosynthesis via DXP pathway; isopentenyl diphosphate from 1-deoxy-D-xylulose 5-phosphate: step 5/6. In terms of biological role, converts 2C-methyl-D-erythritol 2,4-cyclodiphosphate (ME-2,4cPP) into 1-hydroxy-2-methyl-2-(E)-butenyl 4-diphosphate. This is 4-hydroxy-3-methylbut-2-en-1-yl diphosphate synthase (ferredoxin) from Synechococcus sp. (strain CC9605).